The following is a 148-amino-acid chain: Deoxyuridine 5'-triphosphate nucleotidohydrolase (148 aa).

Residues 67-69, N80, 84-86, and M94 contribute to the substrate site; these read RSG and LID.

Belongs to the dUTPase family. Mg(2+) serves as cofactor.

It carries out the reaction dUTP + H2O = dUMP + diphosphate + H(+). It functions in the pathway pyrimidine metabolism; dUMP biosynthesis; dUMP from dCTP (dUTP route): step 2/2. Functionally, this enzyme is involved in nucleotide metabolism: it produces dUMP, the immediate precursor of thymidine nucleotides and it decreases the intracellular concentration of dUTP so that uracil cannot be incorporated into DNA. In Burkholderia ambifaria (strain ATCC BAA-244 / DSM 16087 / CCUG 44356 / LMG 19182 / AMMD) (Burkholderia cepacia (strain AMMD)), this protein is Deoxyuridine 5'-triphosphate nucleotidohydrolase.